Here is a 160-residue protein sequence, read N- to C-terminus: Phosphopantetheine adenylyltransferase (160 aa).

A substrate-binding site is contributed by Thr-10. Residues 10 to 11 and His-18 each bind ATP; that span reads TF. Substrate contacts are provided by Lys-42, Met-74, and Arg-88. ATP contacts are provided by residues 89-91, Glu-99, and 124-130; these read GVR and WSYISST.

The protein belongs to the bacterial CoaD family. As to quaternary structure, homohexamer. It depends on Mg(2+) as a cofactor.

The protein resides in the cytoplasm. It carries out the reaction (R)-4'-phosphopantetheine + ATP + H(+) = 3'-dephospho-CoA + diphosphate. It functions in the pathway cofactor biosynthesis; coenzyme A biosynthesis; CoA from (R)-pantothenate: step 4/5. Functionally, reversibly transfers an adenylyl group from ATP to 4'-phosphopantetheine, yielding dephospho-CoA (dPCoA) and pyrophosphate. The sequence is that of Phosphopantetheine adenylyltransferase from Sodalis glossinidius (strain morsitans).